Consider the following 180-residue polypeptide: Protein YOP1 (180 aa).

Over 1–35 (MADYLKLFQDSLKGLDTKFAGNQILSRIEAQTKLP) the chain is Cytoplasmic. The helical transmembrane segment at 36–55 (RSYVIVGLVAVYFLLIFINV) threads the bilayer. Residues 56–57 (GG) lie on the Lumenal side of the membrane. Residues 58–78 (IGEILSNFVGFCIPTYYSLKA) form a helical membrane-spanning segment. The Cytoplasmic portion of the chain corresponds to 79–88 (LKTATSTDDT). Residues 89–105 (QLLTYWIVFSFLSVIEF) traverse the membrane as a helical segment. The Lumenal portion of the chain corresponds to 106–108 (WSK). Residues 109–127 (AILYWVPFYWFFKTVFLLY) form a helical membrane-spanning segment. Over 128–180 (IAIPSFGGAQLVYTRLISPFSDKYLPIVEGKSGELAQKVEAAANNAKASGYSR) the chain is Cytoplasmic.

Belongs to the DP1 family. Oligomer.

It is found in the endoplasmic reticulum membrane. The protein localises to the golgi apparatus membrane. In terms of biological role, required to generate and maintain the structure of the tubular endoplasmic reticulum network and the vacuole. Induces high curvature in membranes and causes membrane tubule formation. Involved in membrane/vesicle trafficking. This is Protein YOP1 (YOP1) from Kluyveromyces lactis (strain ATCC 8585 / CBS 2359 / DSM 70799 / NBRC 1267 / NRRL Y-1140 / WM37) (Yeast).